The chain runs to 138 residues: Basic phospholipase A2 homolog TM-N49 (138 aa).

Positions methionine 1–glycine 16 are cleaved as a signal peptide. Disulfide bonds link cysteine 42–cysteine 131, cysteine 44–cysteine 60, cysteine 59–cysteine 111, cysteine 65–cysteine 138, cysteine 66–cysteine 104, cysteine 73–cysteine 97, and cysteine 91–cysteine 102.

The protein belongs to the phospholipase A2 family. Group II subfamily. N49 sub-subfamily. Homodimer; non-covalently linked. As to expression, expressed by the venom gland.

It is found in the secreted. Snake venom phospholipase A2 (PLA2) that exhibits potent myotoxic activity causing inflammatory cell infiltration, severe myoedema, myonecrosis and myolysis in the gastrocnemius muscles of BALB/c mice. The chain is Basic phospholipase A2 homolog TM-N49 from Protobothrops mucrosquamatus (Taiwan habu).